The chain runs to 207 residues: Large ribosomal subunit protein uL4 (207 aa).

The interval 50 to 75 (KTKTVSEVSGTTKKPFKQKGTGNARQ) is disordered.

This sequence belongs to the universal ribosomal protein uL4 family. As to quaternary structure, part of the 50S ribosomal subunit.

Its function is as follows. One of the primary rRNA binding proteins, this protein initially binds near the 5'-end of the 23S rRNA. It is important during the early stages of 50S assembly. It makes multiple contacts with different domains of the 23S rRNA in the assembled 50S subunit and ribosome. Forms part of the polypeptide exit tunnel. The protein is Large ribosomal subunit protein uL4 of Rickettsia akari (strain Hartford).